The sequence spans 220 residues: CRIB domain-containing protein RIC3 (220 aa).

The CRIB domain maps to 28-41; sequence IGFPTDVKHVAHIG. The tract at residues 39–220 is disordered; sequence HIGSDGPATN…CNDNNISDKE (182 aa). Positions 61–77 are enriched in polar residues; it reads NENGQVVSRADANNNQI. A compositionally biased stretch (low complexity) spans 108 to 121; sequence NGSPPRRNSSASAS. Composition is skewed to basic residues over residues 127–136 and 172–184; these read NTRRHHRSRH and HSRKSTSRHRKPK. Positions 209 to 220 are enriched in polar residues; the sequence is DTCNDNNISDKE.

Interacts with ARAC11/ROP1. As to expression, expressed in flowers and pollen.

It is found in the cytoplasm. Functionally, functions as a downstream effector of Rho-related GTP binding proteins of the 'Rho of Plants' (ROPs) family. Participates in the propagation of ROP GTPase signals in specific cellular responses. Functions as a downstream effector of ARAC11/ROP1 to activate calcium signaling that leads to F-actin disassembly associated with exocytosis in the tip of the growing pollen tube. Counteracts the ARAC11/ROP1-RIC4 pathway, which promotes apical F-actin assembly associated with vesicle accumulation, to control actin dynamics and pollen tube apical growth. The sequence is that of CRIB domain-containing protein RIC3 (RIC3) from Arabidopsis thaliana (Mouse-ear cress).